The chain runs to 422 residues: Serine hydroxymethyltransferase (422 aa).

Residues Leu-120 and 124 to 126 (GHL) contribute to the (6S)-5,6,7,8-tetrahydrofolate site. N6-(pyridoxal phosphate)lysine is present on Lys-228.

This sequence belongs to the SHMT family. As to quaternary structure, homodimer. It depends on pyridoxal 5'-phosphate as a cofactor.

Its subcellular location is the cytoplasm. The catalysed reaction is (6R)-5,10-methylene-5,6,7,8-tetrahydrofolate + glycine + H2O = (6S)-5,6,7,8-tetrahydrofolate + L-serine. Its pathway is one-carbon metabolism; tetrahydrofolate interconversion. The protein operates within amino-acid biosynthesis; glycine biosynthesis; glycine from L-serine: step 1/1. Its function is as follows. Catalyzes the reversible interconversion of serine and glycine with tetrahydrofolate (THF) serving as the one-carbon carrier. This reaction serves as the major source of one-carbon groups required for the biosynthesis of purines, thymidylate, methionine, and other important biomolecules. Also exhibits THF-independent aldolase activity toward beta-hydroxyamino acids, producing glycine and aldehydes, via a retro-aldol mechanism. The sequence is that of Serine hydroxymethyltransferase from Actinobacillus succinogenes (strain ATCC 55618 / DSM 22257 / CCUG 43843 / 130Z).